A 297-amino-acid polypeptide reads, in one-letter code: F-box only protein 2 (297 aa).

The segment at 1-42 (MDGDGDPESVGQPEEASPEEQQEEACAEEANGGEERPEDDGE) is disordered. Residues 16-27 (ASPEEQQEEACA) are compositionally biased toward acidic residues. Positions 45 to 92 (AAYLDELPEPLLLRVLAELPAAQLVQACRLVCLRWKELVDGAPLWLLK) constitute an F-box domain. An FBA domain is found at 114-297 (FYFLSKRRRN…VTNSSVWVEP (184 aa)). A carbohydrate is bound by residues 211-213 (RRD) and 279-280 (YW).

In terms of assembly, component of the SCF(FBXO2) complex consisting of CUL1, RBX1, SKP1 and FBXO2. Predominantly detected as heterodimer with SKP1; the heterodimer with SKP1 is not part of the SCF(FBXO2) complex.

Its subcellular location is the cytoplasm. The protein localises to the microsome membrane. Its pathway is protein modification; protein ubiquitination. Substrate recognition component of a SCF (SKP1-CUL1-F-box protein) E3 ubiquitin-protein ligase complex that mediates the ubiquitination and subsequent proteasomal degradation of target proteins. Involved in the endoplasmic reticulum-associated degradation pathway (ERAD) for misfolded lumenal proteins by recognizing and binding sugar chains on unfolded glycoproteins that are retrotranslocated into the cytosol and promoting their ubiquitination and subsequent degradation. Prevents formation of cytosolic aggregates of unfolded glycoproteins that have been retrotranslocated into the cytosol. Able to recognize and bind denatured glycoproteins, preferentially those of the high-mannose type. In Bos taurus (Bovine), this protein is F-box only protein 2 (FBXO2).